We begin with the raw amino-acid sequence, 194 residues long: Phosphoheptose isomerase (194 aa).

Residues 37-194 form the SIS domain; sequence IANSFKQGGK…LIEFEMAKTA (158 aa). A substrate-binding site is contributed by 52-54; it reads NGG. His61 and Glu65 together coordinate Zn(2+). Substrate-binding positions include Glu65, 93 to 94, 119 to 121, Ser124, and Gln172; these read ND and STS. Zn(2+) contacts are provided by Gln172 and His180.

It belongs to the SIS family. GmhA subfamily. In terms of assembly, homotetramer. It depends on Zn(2+) as a cofactor.

It is found in the cytoplasm. It carries out the reaction 2 D-sedoheptulose 7-phosphate = D-glycero-alpha-D-manno-heptose 7-phosphate + D-glycero-beta-D-manno-heptose 7-phosphate. The protein operates within carbohydrate biosynthesis; D-glycero-D-manno-heptose 7-phosphate biosynthesis; D-glycero-alpha-D-manno-heptose 7-phosphate and D-glycero-beta-D-manno-heptose 7-phosphate from sedoheptulose 7-phosphate: step 1/1. It functions in the pathway bacterial outer membrane biogenesis; LOS core biosynthesis. Its function is as follows. Catalyzes the isomerization of sedoheptulose 7-phosphate in D-glycero-D-manno-heptose 7-phosphate. This chain is Phosphoheptose isomerase, found in Haemophilus ducreyi (strain 35000HP / ATCC 700724).